A 280-amino-acid polypeptide reads, in one-letter code: Urease accessory protein UreD 1 (280 aa).

It belongs to the UreD family. As to quaternary structure, ureD, UreF and UreG form a complex that acts as a GTP-hydrolysis-dependent molecular chaperone, activating the urease apoprotein by helping to assemble the nickel containing metallocenter of UreC. The UreE protein probably delivers the nickel.

The protein resides in the cytoplasm. Its function is as follows. Required for maturation of urease via the functional incorporation of the urease nickel metallocenter. The sequence is that of Urease accessory protein UreD 1 from Brucella melitensis biotype 1 (strain ATCC 23456 / CCUG 17765 / NCTC 10094 / 16M).